A 419-amino-acid chain; its full sequence is MLEHLRATDPIIADLIEREAQRQRQGLELIASENYTSLAVMEAQGSVLTNKYAEGLPGRRYYGGCEFVDAIEQLAIERACQLFGTSHANVQPHSGAQANIAVFTALLQPGDTILGMRLDHGGHLTHGSPVNFSGKWYNVHFYGVDAQTGQIDYDDLASKARAIRPKLITSGASAYPRIIDFARMRQIADEVGALLMADIAHIAGLVAAGEHPSPVGHAHVITTTTHKTLRGPRGGLILMGDDFAKQLNSSVFPGTQGGPLMHVIAGKAVAFGEALRPEFRQYAAQIRRNARALAEGLMAQGLTLVSGGTDNHLMLVDLRSTGLTGAQAQRALDKAAITVNKNAIPDDPQPPMKTSGIRIGTPAVTTRGMREPEMAQIAAWIGEVLMYPDDEARLNRIAGEVADLCRHFPVPADMVQVRG.

Residues leucine 118 and 122–124 (GHL) each bind (6S)-5,6,7,8-tetrahydrofolate. Position 227 is an N6-(pyridoxal phosphate)lysine (lysine 227).

Belongs to the SHMT family. In terms of assembly, homodimer. The cofactor is pyridoxal 5'-phosphate.

The protein localises to the cytoplasm. The catalysed reaction is (6R)-5,10-methylene-5,6,7,8-tetrahydrofolate + glycine + H2O = (6S)-5,6,7,8-tetrahydrofolate + L-serine. It participates in one-carbon metabolism; tetrahydrofolate interconversion. The protein operates within amino-acid biosynthesis; glycine biosynthesis; glycine from L-serine: step 1/1. Catalyzes the reversible interconversion of serine and glycine with tetrahydrofolate (THF) serving as the one-carbon carrier. This reaction serves as the major source of one-carbon groups required for the biosynthesis of purines, thymidylate, methionine, and other important biomolecules. Also exhibits THF-independent aldolase activity toward beta-hydroxyamino acids, producing glycine and aldehydes, via a retro-aldol mechanism. This chain is Serine hydroxymethyltransferase, found in Chloroflexus aurantiacus (strain ATCC 29364 / DSM 637 / Y-400-fl).